The primary structure comprises 409 residues: uncharacterized protein (409 aa).

A Zn(2+)-binding site is contributed by H46. Residue E49 is the Proton acceptor of the active site. Residues H50 and E126 each coordinate Zn(2+).

Belongs to the peptidase M16 family. The cofactor is Zn(2+).

This is an uncharacterized protein from Bacillus subtilis (strain 168).